The following is an 88-amino-acid chain: U-scoloptoxin(XY)-Er1b (88 aa).

Positions methionine 1–serine 24 are cleaved as a signal peptide. Residues arginine 66–alanine 88 are disordered. A propeptide spanning residues glutamate 79 to alanine 88 is cleaved from the precursor.

Belongs to the scoloptoxin-XY family. In terms of processing, contains 3 disulfide bonds. As to expression, expressed by the venom gland.

The protein localises to the secreted. The chain is U-scoloptoxin(XY)-Er1b from Ethmostigmus rubripes (Giant centipede).